Reading from the N-terminus, the 283-residue chain is MQIVHSIADLRAILSSKGRPAFVPTMGNLHDGHLSLVRAARQHGDIAVASIFVNRLQFLPHEDFDSYPRTWEADCAKLEAEGCDLLFAPREADLYPEPQTFKIQPDAQLADILEGHFRPGFFTGVCTVVMKLFSAVFFASGGGTAVFGKKDYQQLMVIRRMVEQFALPVNIVAGDTARADDGLALSSRNGYLSDDERQQAMALSLALKQLADAARAGQAPLAELEAWAMQSLAAQGWEPDYLTVRLRRDLQPPAEGAQLAGAPLVALGAARLGKTRLIDNLEF.

26 to 33 (MGNLHDGH) lines the ATP pocket. The active-site Proton donor is the H33. Q57 lines the (R)-pantoate pocket. Q57 is a beta-alanine binding site. An ATP-binding site is contributed by 148 to 151 (GKKD). Q154 contacts (R)-pantoate. ATP-binding positions include A177 and 185-188 (LSSR).

This sequence belongs to the pantothenate synthetase family. In terms of assembly, homodimer.

The protein resides in the cytoplasm. It catalyses the reaction (R)-pantoate + beta-alanine + ATP = (R)-pantothenate + AMP + diphosphate + H(+). It participates in cofactor biosynthesis; (R)-pantothenate biosynthesis; (R)-pantothenate from (R)-pantoate and beta-alanine: step 1/1. Its function is as follows. Catalyzes the condensation of pantoate with beta-alanine in an ATP-dependent reaction via a pantoyl-adenylate intermediate. This chain is Pantothenate synthetase, found in Delftia acidovorans (strain DSM 14801 / SPH-1).